The sequence spans 303 residues: tRNA dimethylallyltransferase (303 aa).

ATP is bound at residue 13 to 20 (GPTASGKS). 15–20 (TASGKS) serves as a coordination point for substrate. Interaction with substrate tRNA regions lie at residues 38 to 41 (DSMQ) and 162 to 166 (QRLLR).

Belongs to the IPP transferase family. As to quaternary structure, monomer. Requires Mg(2+) as cofactor.

It carries out the reaction adenosine(37) in tRNA + dimethylallyl diphosphate = N(6)-dimethylallyladenosine(37) in tRNA + diphosphate. Its function is as follows. Catalyzes the transfer of a dimethylallyl group onto the adenine at position 37 in tRNAs that read codons beginning with uridine, leading to the formation of N6-(dimethylallyl)adenosine (i(6)A). The chain is tRNA dimethylallyltransferase from Methylocella silvestris (strain DSM 15510 / CIP 108128 / LMG 27833 / NCIMB 13906 / BL2).